The following is a 211-amino-acid chain: Suppressor of RNA silencing p3 (211 aa).

It belongs to the tenuiviruses p3 protein family. In terms of assembly, homodimer.

It localises to the host cytoplasm. Its function is as follows. Acts as a suppressor of RNA-mediated gene silencing, also known as post-transcriptional gene silencing (PTGS), presumably through the binding of dsRNA. This chain is Suppressor of RNA silencing p3, found in Avena sativa (Oat).